The chain runs to 530 residues: MKFKKIILALACLSSPLYADQDQQLKSEIQRLQHQAEDLQAQLNRLQKQLANHKSSQQKHEQQAAAKPAEPQSKPTVKSGAAIEEKYHSSKVEVHAPDAHPESISFYPTALIADNRVVTYIAGTPVVSSPFLGDRPAFDGSDYIVNISSINRDVRLMQQRRRLYRAYQKIGYPIPNMPIISLSGKAEPAATFNNPFRSTNTDGDITLGSSELDVAAALNENVEAYIAIAYDESPPAIGPRVNNSAFNLNMGFVNIGNLDKSPLYFTAGQVYVPFGRYSSAMVSSPVTMNLARTKTRPVIFGYKSQADTGPFGAVYGYRSDTTLGRSGVGGVNLGYIFGFDNDINGEVGGGFISSIADAGGMQSTGANVGTTFGGFGSITNGNENVRKTKAADVHGHVGYDRYNLTLEWVGAIQSFRPQDLSFNGQGARPQAAQAELGMTFMAFNRPASIGVGYQWTKEALALNLPKRRYVGVFNISIWKDTVESIEYRHDIDYGLTQFANGAAPQGFVNLPTLGTGKSADTVSAQIGVYF.

The signal sequence occupies residues 1–19; the sequence is MKFKKIILALACLSSPLYA. Residues 20-66 are a coiled coil; it reads DQDQQLKSEIQRLQHQAEDLQAQLNRLQKQLANHKSSQQKHEQQAAA. A disordered region spans residues 50-81; the sequence is LANHKSSQQKHEQQAAAKPAEPQSKPTVKSGA. Low complexity predominate over residues 63-75; the sequence is QAAAKPAEPQSKP.

It belongs to the UPF0422 family.

The polypeptide is UPF0422 protein lpg2959 (Legionella pneumophila subsp. pneumophila (strain Philadelphia 1 / ATCC 33152 / DSM 7513)).